The following is a 337-amino-acid chain: RNA 3'-terminal phosphate cyclase (337 aa).

ATP-binding positions include glutamine 101 and 282–285 (HMSD). Residue histidine 306 is the Tele-AMP-histidine intermediate of the active site.

The protein belongs to the RNA 3'-terminal cyclase family. Type 1 subfamily.

The protein resides in the cytoplasm. It catalyses the reaction a 3'-end 3'-phospho-ribonucleotide-RNA + ATP = a 3'-end 2',3'-cyclophospho-ribonucleotide-RNA + AMP + diphosphate. Its function is as follows. Catalyzes the conversion of 3'-phosphate to a 2',3'-cyclic phosphodiester at the end of RNA. The mechanism of action of the enzyme occurs in 3 steps: (A) adenylation of the enzyme by ATP; (B) transfer of adenylate to an RNA-N3'P to produce RNA-N3'PP5'A; (C) and attack of the adjacent 2'-hydroxyl on the 3'-phosphorus in the diester linkage to produce the cyclic end product. The biological role of this enzyme is unknown but it is likely to function in some aspects of cellular RNA processing. This Saccharolobus solfataricus (strain ATCC 35092 / DSM 1617 / JCM 11322 / P2) (Sulfolobus solfataricus) protein is RNA 3'-terminal phosphate cyclase (rtcA).